The primary structure comprises 268 residues: Gene 65 protein (268 aa).

This Mycobacterium (Mycobacteriophage L5) protein is Gene 65 protein (65).